A 457-amino-acid chain; its full sequence is Tubulin beta chain (457 aa).

Positions 11, 69, 138, 142, 143, 144, 204, and 226 each coordinate GTP. Glutamate 69 contacts Mg(2+). The tract at residues glutamate 431–alanine 457 is disordered.

This sequence belongs to the tubulin family. As to quaternary structure, dimer of alpha and beta chains. A typical microtubule is a hollow water-filled tube with an outer diameter of 25 nm and an inner diameter of 15 nM. Alpha-beta heterodimers associate head-to-tail to form protofilaments running lengthwise along the microtubule wall with the beta-tubulin subunit facing the microtubule plus end conferring a structural polarity. Microtubules usually have 13 protofilaments but different protofilament numbers can be found in some organisms and specialized cells. It depends on Mg(2+) as a cofactor.

It is found in the cytoplasm. It localises to the cytoskeleton. In terms of biological role, tubulin is the major constituent of microtubules, a cylinder consisting of laterally associated linear protofilaments composed of alpha- and beta-tubulin heterodimers. Microtubules grow by the addition of GTP-tubulin dimers to the microtubule end, where a stabilizing cap forms. Below the cap, tubulin dimers are in GDP-bound state, owing to GTPase activity of alpha-tubulin. This chain is Tubulin beta chain (TUBB1), found in Porphyra purpurea (Red seaweed).